Reading from the N-terminus, the 199-residue chain is Recombination protein RecR (199 aa).

The C4-type zinc finger occupies 56–71 (CRSCFNVAQSELCRIC). Positions 79 to 174 (ALICVVEEPK…RVTRLASGLP (96 aa)) constitute a Toprim domain.

The protein belongs to the RecR family.

May play a role in DNA repair. It seems to be involved in an RecBC-independent recombinational process of DNA repair. It may act with RecF and RecO. The polypeptide is Recombination protein RecR (Frankia alni (strain DSM 45986 / CECT 9034 / ACN14a)).